A 311-amino-acid chain; its full sequence is Delta-1-pyrroline-5-carboxylate reductase kk1I (311 aa).

Residues 1–31 (MTKRESNTLAVLGCGMVFLVSLLDLANRLLG) form the signal peptide. Asn59 carries N-linked (GlcNAc...) asparagine glycosylation.

Belongs to the pyrroline-5-carboxylate reductase family.

The protein operates within secondary metabolite biosynthesis. Its function is as follows. Delta-1-pyrroline-5-carboxylate reductase; part of the gene cluster that mediates the biosynthesis of KK-1, a novel cyclic depsipeptide with 10 residues which is a promising active compound with high activity against many plant pathogens, especially Botrytis cinerea. Within the pathway, kk1I catalyzes the synthesis of the L-pipecolic acid residue of KK-1 from delta-1-pyrroline-5-carboxylate (P5C), a metabolic intermediate of lysine. The nonribosomal peptide synthetase (NRPS) kk1B catalyzes the elongation and cyclization of the decapeptide chain composed of 1 D-lactic acid residue (D-Lac), 1 pipecolic acid residue (Pip), 1 aspartic acid residue (Asp), 1 isoleucine residue (Ile), 1 glycine residue (Gly), 1 tyrosine residue (Tyr) and 4 valine residues (Val). The Asp, Ile and 3 Val residues are N-methylated by the 5 methyltransferase domains from the NRPS (found in modules 3, 5, 6, 7 and 9), whereas the Tyr residue is O-methylated by the cluster encoded O-methyltransferase kk1A. The thioesterase kk1J is likely to be involved in the corrective mechanism of peptide chain synthesis. The D-lactate dehydrogenase kk1H is involved in the synthesis of D-lactic acid from pyruvic acid, which is recognized by the A domain of the first kk1B module. The pyrroline-5-carboxylate reductase kk1I is involved in the synthesis of the L-pipecolic acid residue of KK-1 from delta-1-pyrroline-5-carboxylate (P5C), a metabolic intermediate of lysine. It still is unclear how kk1C and kk1D are involved in the production of KK-1. This is Delta-1-pyrroline-5-carboxylate reductase kk1I from Curvularia clavata.